Reading from the N-terminus, the 344-residue chain is DNA-directed RNA polymerase subunit alpha (344 aa).

The segment at 1-246 (MPMERFLKDF…EFLFPLVDFE (246 aa)) is alpha N-terminal domain (alpha-NTD). The tract at residues 259-344 (ESSNLLDMSI…VLSKNVKISE (86 aa)) is alpha C-terminal domain (alpha-CTD).

The protein belongs to the RNA polymerase alpha chain family. Homodimer. The RNAP catalytic core consists of 2 alpha, 1 beta, 1 beta' and 1 omega subunit. When a sigma factor is associated with the core the holoenzyme is formed, which can initiate transcription.

It catalyses the reaction RNA(n) + a ribonucleoside 5'-triphosphate = RNA(n+1) + diphosphate. Functionally, DNA-dependent RNA polymerase catalyzes the transcription of DNA into RNA using the four ribonucleoside triphosphates as substrates. The chain is DNA-directed RNA polymerase subunit alpha from Borreliella afzelii (strain PKo) (Borrelia afzelii).